Here is a 2449-residue protein sequence, read N- to C-terminus: Nonribisomal peptide synthetase phqB (2449 aa).

Positions 253-654 are adenylation 1; the sequence is IQVHSGPGRL…GRRDTVVKIR (402 aa). In terms of domain architecture, Carrier 1 spans 795 to 870; it reads LPMTPNEDVL…LRTVAKEARP (76 aa). S815 carries the post-translational modification O-(pantetheine 4'-phosphoryl)serine. Residues 913 to 1337 form a condensation 1 region; that stretch reads QDIYPTTPLQ…LISDRDSELL (425 aa). Residues 1357–1756 form an adenylation 2 region; that stretch reads EAQVTRNPSK…TFTFLGRTNQ (400 aa). Residues 1915–1993 enclose the Carrier 2 domain; sequence WALSKHIGQL…MVAEMIDRTP (79 aa). S1952 bears the O-(pantetheine 4'-phosphoryl)serine mark. A reductase (R) domain region spans residues 2041–2297; sequence LTGATGFLGT…VAAVDWVASL (257 aa). Positions 2045, 2249, and 2259 each coordinate NADPH.

Belongs to the NRP synthetase family.

It participates in alkaloid biosynthesis. Its function is as follows. Nonribisomal peptide synthetase; part of the gene cluster that mediates the biosynthesis of paraherquamide, a fungal indole alkaloid that belongs to a family of natural products containing a characteristic bicyclo[2.2.2]diazaoctane core. The first steps in the biosynthesis of paraherquamide is the production of the beta-methyl-proline precursor from L-isoleucine. They require oxidation of a terminally hydroxylated L-isoleucine to the corresponding aldehyde by enzymes which have still to be identified. Spontaneous cyclization and dehydration would yield the 4-methyl pyrolline-5-carboxylic acid, which is then reduced by the pyrroline-5-carboxylate reductase phqD leading to the beta-methyl-proline precursor. The next step of paraherquamide biosynthesis involves coupling of beta-methyl-proline and L-tryptophan by the bimodular NRPS phqB, to produce a monooxopiperazine intermediate. The reductase (R) domain of phqB utilizes NADPH for hydride transfer to reduce the thioester bond of the T domain-tethered linear dipeptide to a hemithioaminal intermediate, which spontaneously cleaves the C-S bond to release the aldehyde product. This compound undergoes spontaneous cyclization and dehydration to give a dienamine which is reverse prenylated at C-2 by the reverse prenyltransferase phqJ. The other prenyltransferase present in the cluster, phqI may be a redundant gene in the pathway. During biosynthetic assembly, the key step to produce the polycyclic core is catalyzed by the bifunctional reductase and intramolecular [4+2] Diels-Alderase, phqE, resulting in formation of the [2.2.2] diazaoctane intermediate preparaherquamide. Following formation of preparaherquamide, an indole 2,3-epoxidation-initiated pinacol-like rearrangement is catalyzed by the phqK FAD-dependent monooxygenase. The prenyltransferase phqA, the cytochrome P450 monooxygenase phqL, and the FAD-linked oxidoreductase phqH (or the cytochrome P450 monooxygenase phqM), are proposed to be involved in the formation of the pyran ring. The FAD-dependent monooxygenase phqK is likely responsible for generation of the spiro-oxindole, and the N-methylation is likely mediated by the phqN methyltransferase leading to the isolable natural product paraherquamide F. However, the order of these biosynthetic steps has still to be determined. In late-stage paraherquamide biosynthesis, the third P450 monooxygenase, phqO, is probably responsible for the C-14 hydroxylation, transforming paraherquamide F to paraherquamide G, and paraherquamide E to the final product paraherquamide A. The expansion from the 6-membered ring pyran (in paraherquamides F and G) to the 7-membered dioxepin ring (in paraherquamides A and E) represents a poorly understood but intriguing process that probably involves the 2-oxoglutarate-dependent dioxygenase phqC. Finally, the remaining members of the paraherquamide cluster, including phqI as well as phqM (or phqH), do not have a clearly prescribed role and appear to be redundant. This is Nonribisomal peptide synthetase phqB from Penicillium fellutanum.